A 1894-amino-acid polypeptide reads, in one-letter code: Fibronectin type III domain-containing protein 1 (1894 aa).

The signal sequence occupies residues Met-1–Ser-32. Residues His-39–Gly-131 form the Fibronectin type-III 1 domain. Residue Asn-149 is glycosylated (N-linked (GlcNAc...) asparagine). 3 Fibronectin type-III domains span residues Pro-158–Asp-258, Val-262–Ser-357, and Ala-362–Thr-457. 4 disordered regions span residues Pro-455–Arg-500, Ala-515–Pro-1271, Leu-1311–Gly-1350, and Thr-1444–Gly-1515. A compositionally biased stretch (basic residues) spans Thr-565 to His-574. Low complexity predominate over residues Pro-614 to Ser-625. Positions Thr-626–Asp-641 are enriched in polar residues. Low complexity-rich tracts occupy residues Ser-711 to Pro-722 and Ser-759 to Ser-778. The residue at position 717 (Ser-717) is a Phosphoserine. Residues Gly-786–Arg-799 show a composition bias toward basic and acidic residues. 2 stretches are compositionally biased toward polar residues: residues Lys-941 to Asp-957 and Ser-1027 to Ser-1060. Residues Gln-1071–Ala-1088 show a composition bias toward acidic residues. The span at Pro-1166 to Ser-1176 shows a compositional bias: polar residues. Residues Ser-1197–Pro-1209 are compositionally biased toward low complexity. A compositionally biased stretch (basic and acidic residues) spans Gly-1211–Pro-1226. A compositionally biased stretch (low complexity) spans His-1445 to Thr-1504. The 95-residue stretch at Ala-1658–Asp-1752 folds into the Fibronectin type-III 5 domain. N-linked (GlcNAc...) asparagine glycosylation occurs at Asn-1661.

In terms of tissue distribution, almost absent from healthy skin; especially in epidermal keratinocytes, skin fibroblasts or endothelial cells and is barely detectable in benign melanocytic naevi. Expressed in the stroma close to skin tumors, in the tumor cells themselves and in the epidermis of psoriasis.

It localises to the secreted. Its function is as follows. May be an activator of G protein signaling. This chain is Fibronectin type III domain-containing protein 1 (FNDC1), found in Homo sapiens (Human).